We begin with the raw amino-acid sequence, 142 residues long: Hemoglobin A subunit alpha-2 (142 aa).

The region spanning 2–142 (VLTAGDKANV…VAQNLTSKYR (141 aa)) is the Globin domain. His-59 contacts O2. Residue His-88 participates in heme b binding.

It belongs to the globin family. In terms of assembly, tetramer of alpha-1, alpha-2 and two identical beta chains. In terms of tissue distribution, red blood cells.

Involved in oxygen transport from the lung to the various peripheral tissues. This is Hemoglobin A subunit alpha-2 from Aldabrachelys gigantea (Aldabra giant tortoise).